The chain runs to 481 residues: Beta-1,3-glucan-binding protein (481 aa).

Residues 1–17 form the signal peptide; it reads MKVLVVFIFCLVRSTFG. A CBM39 domain is found at 19–123; the sequence is FEVPDALVEV…QKFVVKQLLD (105 aa). The GH16 domain maps to 211–481; that stretch reads HRLTIRPVPS…EVDYVKVSAL (271 aa). Asn-467 carries N-linked (GlcNAc...) asparagine glycosylation.

This sequence belongs to the insect beta-1,3-glucan binding protein family. Post-translationally, the N-terminus is blocked. In terms of tissue distribution, hemolymph.

Its subcellular location is the secreted. Functionally, involved in the recognition of invading microorganisms. Binds specifically to beta-1,3-glucan and activates the phenoloxidase cascade. In Tenebrio molitor (Yellow mealworm beetle), this protein is Beta-1,3-glucan-binding protein (GRP).